A 159-amino-acid chain; its full sequence is 2-C-methyl-D-erythritol 2,4-cyclodiphosphate synthase (159 aa).

Residues Asp8 and His10 each contribute to the a divalent metal cation site. Residues 8–10 (DVH) and 34–35 (HS) each bind 4-CDP-2-C-methyl-D-erythritol 2-phosphate. His42 lines the a divalent metal cation pocket. Residues 56–58 (DIG), 61–65 (FPDTD), 100–106 (AQAPKML), 132–135 (TTTE), Phe139, and Arg142 contribute to the 4-CDP-2-C-methyl-D-erythritol 2-phosphate site.

Belongs to the IspF family. Homotrimer. It depends on a divalent metal cation as a cofactor.

The catalysed reaction is 4-CDP-2-C-methyl-D-erythritol 2-phosphate = 2-C-methyl-D-erythritol 2,4-cyclic diphosphate + CMP. It participates in isoprenoid biosynthesis; isopentenyl diphosphate biosynthesis via DXP pathway; isopentenyl diphosphate from 1-deoxy-D-xylulose 5-phosphate: step 4/6. Involved in the biosynthesis of isopentenyl diphosphate (IPP) and dimethylallyl diphosphate (DMAPP), two major building blocks of isoprenoid compounds. Catalyzes the conversion of 4-diphosphocytidyl-2-C-methyl-D-erythritol 2-phosphate (CDP-ME2P) to 2-C-methyl-D-erythritol 2,4-cyclodiphosphate (ME-CPP) with a corresponding release of cytidine 5-monophosphate (CMP). This is 2-C-methyl-D-erythritol 2,4-cyclodiphosphate synthase from Klebsiella pneumoniae subsp. pneumoniae (strain ATCC 700721 / MGH 78578).